A 337-amino-acid polypeptide reads, in one-letter code: MLEGLVSQESLSLNSMDMSVLERLKWVQQQQQQLQQVVSHSSNNSPELLQILQFHGSNNDELLESSFSQFQMLGSGFGPNYNMGFGPPHESISRTSSCHMEPVDTMEVLLKTGEETRAVALKNKRKPEVKTREEQKTEKKIKVEAETESSMKGKSNMGNTEASSDTSKETSKGASENQKLDYIHVRARRGQATDRHSLAERARREKISKKMKYLQDIVPGCNKVTGKAGMLDEIINYVQCLQRQVEFLSMKLAVLNPELELAVEDVSVKQFQAYFTNVVASKQSIMVDVPLFPLDQQGSLDLSAINPNQTTSIEAPSGSWETQSQSLYNTSSLGFHY.

Residues 119 to 180 (VALKNKRKPE…SKGASENQKL (62 aa)) are disordered. The segment covering 126-151 (KPEVKTREEQKTEKKIKVEAETESSM) has biased composition (basic and acidic residues). The span at 152–165 (KGKSNMGNTEASSD) shows a compositional bias: polar residues. Residues 191–241 (QATDRHSLAERARREKISKKMKYLQDIVPGCNKVTGKAGMLDEIINYVQCL) enclose the bHLH domain.

Homodimer. Interacts with IBH1. Highly expressed in hypocotyls and cotyledons. Expressed in leaves, stems, and flowers.

It is found in the nucleus. Its function is as follows. Atypical bHLH transcription factor that acts as a positive regulator of cell elongation downstream of multiple external and endogenous signals by direct binding to the promoters and activation of the two expansin genes EXPA1 and EXPA8, encoding cell wall loosening enzymes. Transcriptional activity is inhibited when binding to the bHLH transcription factor IBH1. This chain is Transcription factor HBI1 (HBI1), found in Arabidopsis thaliana (Mouse-ear cress).